The following is a 55-amino-acid chain: Eclosion hormone (55 aa).

It belongs to the insect eclosion hormone family.

It localises to the secreted. Its function is as follows. Neuropeptide that triggers the performance of ecdysis behaviors at the end of a molt. It triggers adult behavior patterns: larval, pupal and adult ecdysis, and plasticization during the molt. The sequence is that of Eclosion hormone from Romalea microptera (Eastern lubber grasshopper).